The chain runs to 1406 residues: Inactive tyrosine-protein kinase PRAG1 (1406 aa).

Serine 148 is modified (phosphoserine). Over residues 184–193 the composition is skewed to basic and acidic residues; sequence EEKAVHKEKP. 2 disordered regions span residues 184 to 205 and 217 to 248; these read EEKAVHKEKPSFPYQDRPSTQE and TTSGCHQGPGPLRESLPSEDDSDQRCSPSGDS. Phosphotyrosine occurs at positions 253, 365, and 413. 2 disordered regions span residues 372–470 and 484–854; these read PAPE…TPQV and DHRT…HSET. A compositionally biased stretch (basic and acidic residues) spans 526-542; it reads RESHAHSASESKPKERP. Residues 546–576 are compositionally biased toward low complexity; it reads PKLSKSSPVGSPVSPSAGGPPVSPLADLSDG. Composition is skewed to polar residues over residues 660–671 and 678–695; these read NGPTDHSNSTTW and DGSSGQNSKVGTGMSKSA. Phosphoserine is present on residues serine 696 and serine 745. Polar residues-rich tracts occupy residues 737–746 and 754–770; these read SQGSAESLSP and SFTTGSTDSLASDSRTC. Serine 782 carries the phosphoserine modification. Positions 798-808 are enriched in polar residues; it reads SGSTEDVSPSG. Serine 826 is modified (phosphoserine). The segment at 933-976 is required for homodimerization; that stretch reads STQLQLHGLLSNISSKEGTYAKLGGLYTQSLARLVAKCEDLFMG. In terms of domain architecture, Protein kinase spans 978 to 1329; the sequence is QKKELHFNEN…EAKRVLQCLL (352 aa). The segment covering 1163-1173 has biased composition (pro residues); sequence GPAPAPAPAPA. The interval 1163-1206 is disordered; sequence GPAPAPAPAPAPAAAAPPCSSAAPPAGGTLSPAAGPASPEGPRE. A compositionally biased stretch (low complexity) spans 1174–1202; it reads PAAAAPPCSSAAPPAGGTLSPAAGPASPE. A required for homodimerization region spans residues 1331–1406; it reads GPRRELVQQP…LQSLKLLQLL (76 aa).

This sequence belongs to the protein kinase superfamily. Homodimer. Dimerization leads to the catalytic activation of CSK. Interacts (via C-terminus) with RND2. Interacts with CSK (via SH2 domain) in a Tyr-413 phosphorylation-dependent manner; this interaction potentiates kinase activity of CSK. Interacts with PEAK1. Interacts with NOTCH1 intracellular domain (N1ICD). Forms a complex with N1ICD and MAML1, in a MAML1-dependent manner. Post-translationally, phosphorylated by CSK on Tyr-253, Tyr-365, and Tyr-413; Tyr-413 is a primary site of phosphorylation.

The protein resides in the cytoplasm. Its subcellular location is the cell junction. It localises to the focal adhesion. It is found in the nucleus. Catalytically inactive protein kinase that acts as a scaffold protein. Functions as an effector of the small GTPase RND2, which stimulates RhoA activity and inhibits NGF-induced neurite outgrowth. Promotes Src family kinase (SFK) signaling by regulating the subcellular localization of CSK, a negative regulator of these kinases, leading to the regulation of cell morphology and motility by a CSK-dependent mechanism. Acts as a critical coactivator of Notch signaling. This is Inactive tyrosine-protein kinase PRAG1 from Homo sapiens (Human).